We begin with the raw amino-acid sequence, 393 residues long: Arginine biosynthesis bifunctional protein ArgJ (393 aa).

Substrate-binding residues include T143, K168, T179, E265, N388, and T393. The active-site Nucleophile is the T179.

It belongs to the ArgJ family. As to quaternary structure, heterotetramer of two alpha and two beta chains.

It localises to the cytoplasm. The catalysed reaction is N(2)-acetyl-L-ornithine + L-glutamate = N-acetyl-L-glutamate + L-ornithine. It catalyses the reaction L-glutamate + acetyl-CoA = N-acetyl-L-glutamate + CoA + H(+). It functions in the pathway amino-acid biosynthesis; L-arginine biosynthesis; L-ornithine and N-acetyl-L-glutamate from L-glutamate and N(2)-acetyl-L-ornithine (cyclic): step 1/1. It participates in amino-acid biosynthesis; L-arginine biosynthesis; N(2)-acetyl-L-ornithine from L-glutamate: step 1/4. In terms of biological role, catalyzes two activities which are involved in the cyclic version of arginine biosynthesis: the synthesis of N-acetylglutamate from glutamate and acetyl-CoA as the acetyl donor, and of ornithine by transacetylation between N(2)-acetylornithine and glutamate. This Syntrophotalea carbinolica (strain DSM 2380 / NBRC 103641 / GraBd1) (Pelobacter carbinolicus) protein is Arginine biosynthesis bifunctional protein ArgJ.